We begin with the raw amino-acid sequence, 320 residues long: tRNA pseudouridine synthase B (320 aa).

Aspartate 49 (nucleophile) is an active-site residue.

The protein belongs to the pseudouridine synthase TruB family. Type 1 subfamily.

It catalyses the reaction uridine(55) in tRNA = pseudouridine(55) in tRNA. In terms of biological role, responsible for synthesis of pseudouridine from uracil-55 in the psi GC loop of transfer RNAs. In Bartonella tribocorum (strain CIP 105476 / IBS 506), this protein is tRNA pseudouridine synthase B.